Here is a 330-residue protein sequence, read N- to C-terminus: 4-hydroxythreonine-4-phosphate dehydrogenase (330 aa).

The substrate site is built by His133 and Thr134. Residues His163, His208, and His263 each contribute to the a divalent metal cation site. Residues Lys271, Asn280, and Arg289 each contribute to the substrate site.

It belongs to the PdxA family. Homodimer. Requires Zn(2+) as cofactor. Mg(2+) is required as a cofactor. Co(2+) serves as cofactor.

It is found in the cytoplasm. The catalysed reaction is 4-(phosphooxy)-L-threonine + NAD(+) = 3-amino-2-oxopropyl phosphate + CO2 + NADH. Its pathway is cofactor biosynthesis; pyridoxine 5'-phosphate biosynthesis; pyridoxine 5'-phosphate from D-erythrose 4-phosphate: step 4/5. Catalyzes the NAD(P)-dependent oxidation of 4-(phosphooxy)-L-threonine (HTP) into 2-amino-3-oxo-4-(phosphooxy)butyric acid which spontaneously decarboxylates to form 3-amino-2-oxopropyl phosphate (AHAP). This is 4-hydroxythreonine-4-phosphate dehydrogenase from Azoarcus sp. (strain BH72).